Reading from the N-terminus, the 116-residue chain is NADPH-dependent 7-cyano-7-deazaguanine reductase (116 aa).

Cysteine 31 serves as the catalytic Thioimide intermediate. The active-site Proton donor is aspartate 38. Residues 53–55 (VEL) and 72–73 (YE) each bind substrate.

This sequence belongs to the GTP cyclohydrolase I family. QueF type 1 subfamily.

Its subcellular location is the cytoplasm. It carries out the reaction 7-aminomethyl-7-carbaguanine + 2 NADP(+) = 7-cyano-7-deazaguanine + 2 NADPH + 3 H(+). It participates in tRNA modification; tRNA-queuosine biosynthesis. Its function is as follows. Catalyzes the NADPH-dependent reduction of 7-cyano-7-deazaguanine (preQ0) to 7-aminomethyl-7-deazaguanine (preQ1). The polypeptide is NADPH-dependent 7-cyano-7-deazaguanine reductase (Chlorobium chlorochromatii (strain CaD3)).